The sequence spans 126 residues: Major sperm protein 1 (126 aa).

Ala-2 bears the N-acetylalanine mark. An MSP domain is found at 8 to 125 (DIATMPAQKV…RRKNLPIEYN (118 aa)).

Sperm.

The protein localises to the cell projection. It is found in the pseudopodium. It localises to the cytoplasm. Its subcellular location is the cytoskeleton. In terms of biological role, central component in molecular interactions underlying sperm crawling. Forms an extensive filament system that extends from sperm villipoda, along the leading edge of the pseudopod. The chain is Major sperm protein 1 (MSP-1) from Globodera rostochiensis (Golden nematode worm).